Reading from the N-terminus, the 617-residue chain is AUGMIN subunit 3 (617 aa).

3 coiled-coil regions span residues 107-140 (DATL…SSAL), 314-334 (LHSL…LYQK), and 481-504 (AIIQ…ENSL).

This sequence belongs to the HAUS3 family. Part of the augmin complex composed of 8 subunits. The complex acts on microtubules and interacts with gamma-tubulin in spindles and the phragmoplast. Interacts with AUG1.

The protein localises to the cytoplasm. It localises to the cytoskeleton. It is found in the spindle. The protein resides in the phragmoplast. In terms of biological role, involved in microtubules reorganization during spindle and phragmoplast development. Required for gamma-tubulin localization during mitosis. The protein is AUGMIN subunit 3 of Arabidopsis thaliana (Mouse-ear cress).